The primary structure comprises 69 residues: Cytoinsectotoxin-2a (69 aa).

This sequence belongs to the cationic peptide 06 (cytoinsectotoxin) family. Expressed by the venom gland.

Its subcellular location is the secreted. Insecticidal and antimicrobial peptide. Has insecticidal activity against larvae of flesh fly S.carnaria. Has antibacterial activity against Gram-positive bacterium B.subtilis B-501 (MIC=1.25 uM) and Gram-negative bacterium E.coli DH5alpha (MIC=2.5 uM). The protein is Cytoinsectotoxin-2a of Lachesana tarabaevi (Spider).